We begin with the raw amino-acid sequence, 130 residues long: MSGKGGKAGSAAKASQSRSAKAGLTFPVGRVHRLLRKGNYAQRIGSGAPVYLTAVLEYLAAEILELAGNAARDNKKTRIIPRHLQLAIRNDDELNKLLGNVTIAQGGVLPNIHQNLLPKKSSKAKASQEL.

N6-acetyllysine is present on residues Lys4 and Lys7. Gln105 is modified (N5-methylglutamine). A Phosphoserine modification is found at Ser127. A [ST]-Q motif motif is present at residues 127-128 (SQ).

The protein belongs to the histone H2A family. The nucleosome is a histone octamer containing two molecules each of H2A, H2B, H3 and H4 assembled in one H3-H4 heterotetramer and two H2A-H2B heterodimers. The octamer wraps approximately 147 bp of DNA. Phosphorylated to form H2AS128ph (gamma-H2A) in response to DNA double-strand breaks (DSBs) generated by exogenous genotoxic agents and by stalled replication forks. Phosphorylation is dependent on the DNA damage checkpoint kinases MEC1/ATR and TEL1/ATM, spreads on either side of a detected DSB site and may mark the surrounding chromatin for recruitment of proteins required for DNA damage signaling and repair. Gamma-H2A is removed from the DNA prior to the strand invasion-primer extension step of the repair process and subsequently dephosphorylated by PPH3, a component of the histone H2A phosphatase complex (HTP-C). Dephosphorylation is necessary for efficient recovery from the DNA damage checkpoint. In terms of processing, acetylated by ESA1 to form H2AK4ac and H2AK7ac.

Its subcellular location is the nucleus. The protein localises to the chromosome. Functionally, core component of nucleosome which plays a central role in DNA double strand break (DSB) repair. Nucleosomes wrap and compact DNA into chromatin, limiting DNA accessibility to the cellular machineries which require DNA as a template. Histones thereby play a central role in transcription regulation, DNA repair, DNA replication and chromosomal stability. DNA accessibility is regulated via a complex set of post-translational modifications of histones, also called histone code, and nucleosome remodeling. The polypeptide is Histone H2A (HTA1) (Kluyveromyces lactis (strain ATCC 8585 / CBS 2359 / DSM 70799 / NBRC 1267 / NRRL Y-1140 / WM37) (Yeast)).